The primary structure comprises 226 residues: Imidazole glycerol phosphate synthase subunit HisH (226 aa).

Residues asparagine 6–alanine 214 enclose the Glutamine amidotransferase type-1 domain. Residue cysteine 84 is the Nucleophile of the active site. Active-site residues include histidine 189 and glutamate 191.

In terms of assembly, heterodimer of HisH and HisF.

Its subcellular location is the cytoplasm. It catalyses the reaction 5-[(5-phospho-1-deoxy-D-ribulos-1-ylimino)methylamino]-1-(5-phospho-beta-D-ribosyl)imidazole-4-carboxamide + L-glutamine = D-erythro-1-(imidazol-4-yl)glycerol 3-phosphate + 5-amino-1-(5-phospho-beta-D-ribosyl)imidazole-4-carboxamide + L-glutamate + H(+). It carries out the reaction L-glutamine + H2O = L-glutamate + NH4(+). Its pathway is amino-acid biosynthesis; L-histidine biosynthesis; L-histidine from 5-phospho-alpha-D-ribose 1-diphosphate: step 5/9. In terms of biological role, IGPS catalyzes the conversion of PRFAR and glutamine to IGP, AICAR and glutamate. The HisH subunit catalyzes the hydrolysis of glutamine to glutamate and ammonia as part of the synthesis of IGP and AICAR. The resulting ammonia molecule is channeled to the active site of HisF. The polypeptide is Imidazole glycerol phosphate synthase subunit HisH (Gloeobacter violaceus (strain ATCC 29082 / PCC 7421)).